Reading from the N-terminus, the 308-residue chain is Inactive C-alpha-formylglycine-generating enzyme 2 (308 aa).

An N-terminal signal peptide occupies residues 1-33; that stretch reads MRSEFWFPSMGSLLPPVLLLWLLSCPRLQLGHA. Cys163 and Cys297 form a disulfide bridge. Asn198 is a glycosylation site (N-linked (GlcNAc...) asparagine). 8 residues coordinate Ca(2+): Asn201, Leu202, Asp215, Phe217, Asp236, Gly239, Val241, and Glu243. A compositionally biased stretch (polar residues) spans 281–291; it reads RMGNTPDSASD. The disordered stretch occupies residues 281–308; it reads RMGNTPDSASDNLGFRCASSAGRPKEDL. Positions 305-308 match the Non-canonical ER retention motif motif; sequence KEDL.

The protein belongs to the sulfatase-modifying factor family. In terms of assembly, homodimer and heterodimer with SUMF1.

It localises to the endoplasmic reticulum lumen. Functionally, lacks formylglycine generating activity and is unable to convert newly synthesized inactive sulfatases to their active form. Inhibits the activation of sulfatases by SUMF1. The chain is Inactive C-alpha-formylglycine-generating enzyme 2 from Mus musculus (Mouse).